Reading from the N-terminus, the 426-residue chain is D-tagatose-1,6-bisphosphate aldolase subunit KbaZ (426 aa).

This sequence belongs to the GatZ/KbaZ family. KbaZ subfamily. In terms of assembly, forms a complex with KbaY.

Its pathway is carbohydrate metabolism; D-tagatose 6-phosphate degradation; D-glyceraldehyde 3-phosphate and glycerone phosphate from D-tagatose 6-phosphate: step 2/2. Its function is as follows. Component of the tagatose-1,6-bisphosphate aldolase KbaYZ that is required for full activity and stability of the Y subunit. Could have a chaperone-like function for the proper and stable folding of KbaY. When expressed alone, KbaZ does not show any aldolase activity. The sequence is that of D-tagatose-1,6-bisphosphate aldolase subunit KbaZ from Escherichia coli O17:K52:H18 (strain UMN026 / ExPEC).